Reading from the N-terminus, the 269-residue chain is Monofunctional glycosyltransferase (269 aa).

Residues 46–66 (ILLTILIIIALFIGIMYFLST) traverse the membrane as a helical segment.

The protein belongs to the glycosyltransferase 51 family.

It localises to the cell membrane. The catalysed reaction is [GlcNAc-(1-&gt;4)-Mur2Ac(oyl-L-Ala-gamma-D-Glu-L-Lys-D-Ala-D-Ala)](n)-di-trans,octa-cis-undecaprenyl diphosphate + beta-D-GlcNAc-(1-&gt;4)-Mur2Ac(oyl-L-Ala-gamma-D-Glu-L-Lys-D-Ala-D-Ala)-di-trans,octa-cis-undecaprenyl diphosphate = [GlcNAc-(1-&gt;4)-Mur2Ac(oyl-L-Ala-gamma-D-Glu-L-Lys-D-Ala-D-Ala)](n+1)-di-trans,octa-cis-undecaprenyl diphosphate + di-trans,octa-cis-undecaprenyl diphosphate + H(+). Its pathway is cell wall biogenesis; peptidoglycan biosynthesis. Its function is as follows. Peptidoglycan polymerase that catalyzes glycan chain elongation using lipid-linked disaccharide-pentapeptide as the substrate. The chain is Monofunctional glycosyltransferase from Staphylococcus aureus (strain Newman).